The chain runs to 424 residues: Histidinol dehydrogenase (424 aa).

Positions 124, 186, and 209 each coordinate NAD(+). Substrate is bound by residues S232, Q254, and H257. 2 residues coordinate Zn(2+): Q254 and H257. Residues E322 and H323 each act as proton acceptor in the active site. The substrate site is built by H323, D356, E410, and H415. Residue D356 coordinates Zn(2+). H415 is a binding site for Zn(2+).

Belongs to the histidinol dehydrogenase family. Zn(2+) serves as cofactor.

It carries out the reaction L-histidinol + 2 NAD(+) + H2O = L-histidine + 2 NADH + 3 H(+). It participates in amino-acid biosynthesis; L-histidine biosynthesis; L-histidine from 5-phospho-alpha-D-ribose 1-diphosphate: step 9/9. Catalyzes the sequential NAD-dependent oxidations of L-histidinol to L-histidinaldehyde and then to L-histidine. The sequence is that of Histidinol dehydrogenase from Moorella thermoacetica (strain ATCC 39073 / JCM 9320).